We begin with the raw amino-acid sequence, 1563 residues long: Pentafunctional AROM polypeptide (1563 aa).

A 3-dehydroquinate synthase region spans residues 1 to 382 (MAEPISNPTR…YEPKASVVED (382 aa)). NAD(+)-binding positions include 48-50 (DTN), 82-85 (EYSK), 113-115 (GGV), and aspartate 118. Arginine 129 contacts 7-phospho-2-dehydro-3-deoxy-D-arabino-heptonate. An NAD(+)-binding site is contributed by 138 to 139 (TT). Aspartate 145 and lysine 151 together coordinate 7-phospho-2-dehydro-3-deoxy-D-arabino-heptonate. Lysine 160 is a binding site for NAD(+). Asparagine 161 lines the 7-phospho-2-dehydro-3-deoxy-D-arabino-heptonate pocket. NAD(+) is bound by residues 178 to 181 (FLNT) and asparagine 189. Glutamate 193 contacts Zn(2+). 7-phospho-2-dehydro-3-deoxy-D-arabino-heptonate-binding positions include 193 to 196 (EVIK) and lysine 248. The Proton acceptor; for 3-dehydroquinate synthase activity role is filled by glutamate 258. Residues 262–266 (RNLLN) and histidine 269 each bind 7-phospho-2-dehydro-3-deoxy-D-arabino-heptonate. Histidine 269 is a binding site for Zn(2+). The active-site Proton acceptor; for 3-dehydroquinate synthase activity is the histidine 273. Histidine 285 and lysine 354 together coordinate 7-phospho-2-dehydro-3-deoxy-D-arabino-heptonate. Histidine 285 is a binding site for Zn(2+). An EPSP synthase region spans residues 395–834 (VFAGVPKDLN…WDTMSNYFKV (440 aa)). Cysteine 816 serves as the catalytic For EPSP synthase activity. The segment at 857–1051 (PKSIFIIGMR…KKKPHSFFVS (195 aa)) is shikimate kinase. 864 to 871 (GMRGAGKS) is a binding site for ATP. A 3-dehydroquinase region spans residues 1052–1265 (LTVPNVSKAL…AAPGQLSAAE (214 aa)). Residue histidine 1168 is the Proton acceptor; for 3-dehydroquinate dehydratase activity of the active site. The active-site Schiff-base intermediate with substrate; for 3-dehydroquinate dehydratase activity is lysine 1196. The segment at 1278–1563 (PRSFHLFGNP…TDAQAAVMGN (286 aa)) is shikimate dehydrogenase.

In the N-terminal section; belongs to the sugar phosphate cyclases superfamily. Dehydroquinate synthase family. The protein in the 2nd section; belongs to the EPSP synthase family. This sequence in the 3rd section; belongs to the shikimate kinase family. It in the 4th section; belongs to the type-I 3-dehydroquinase family. In the C-terminal section; belongs to the shikimate dehydrogenase family. Homodimer. Zn(2+) is required as a cofactor.

It localises to the cytoplasm. The enzyme catalyses 7-phospho-2-dehydro-3-deoxy-D-arabino-heptonate = 3-dehydroquinate + phosphate. The catalysed reaction is 3-dehydroquinate = 3-dehydroshikimate + H2O. It carries out the reaction shikimate + NADP(+) = 3-dehydroshikimate + NADPH + H(+). It catalyses the reaction shikimate + ATP = 3-phosphoshikimate + ADP + H(+). The enzyme catalyses 3-phosphoshikimate + phosphoenolpyruvate = 5-O-(1-carboxyvinyl)-3-phosphoshikimate + phosphate. Its pathway is metabolic intermediate biosynthesis; chorismate biosynthesis; chorismate from D-erythrose 4-phosphate and phosphoenolpyruvate: step 2/7. The protein operates within metabolic intermediate biosynthesis; chorismate biosynthesis; chorismate from D-erythrose 4-phosphate and phosphoenolpyruvate: step 3/7. It functions in the pathway metabolic intermediate biosynthesis; chorismate biosynthesis; chorismate from D-erythrose 4-phosphate and phosphoenolpyruvate: step 4/7. It participates in metabolic intermediate biosynthesis; chorismate biosynthesis; chorismate from D-erythrose 4-phosphate and phosphoenolpyruvate: step 5/7. Its pathway is metabolic intermediate biosynthesis; chorismate biosynthesis; chorismate from D-erythrose 4-phosphate and phosphoenolpyruvate: step 6/7. In terms of biological role, the AROM polypeptide catalyzes 5 consecutive enzymatic reactions in prechorismate polyaromatic amino acid biosynthesis. The protein is Pentafunctional AROM polypeptide of Neurospora crassa (strain ATCC 24698 / 74-OR23-1A / CBS 708.71 / DSM 1257 / FGSC 987).